We begin with the raw amino-acid sequence, 1406 residues long: DNA-directed RNA polymerase subunit beta' (1406 aa).

Cys70, Cys72, Cys85, and Cys88 together coordinate Zn(2+). Residues Asp460, Asp462, and Asp464 each contribute to the Mg(2+) site. The Zn(2+) site is built by Cys814, Cys888, Cys895, and Cys898.

Belongs to the RNA polymerase beta' chain family. The RNAP catalytic core consists of 2 alpha, 1 beta, 1 beta' and 1 omega subunit. When a sigma factor is associated with the core the holoenzyme is formed, which can initiate transcription. Mg(2+) serves as cofactor. It depends on Zn(2+) as a cofactor.

It carries out the reaction RNA(n) + a ribonucleoside 5'-triphosphate = RNA(n+1) + diphosphate. Its function is as follows. DNA-dependent RNA polymerase catalyzes the transcription of DNA into RNA using the four ribonucleoside triphosphates as substrates. The chain is DNA-directed RNA polymerase subunit beta' from Photorhabdus laumondii subsp. laumondii (strain DSM 15139 / CIP 105565 / TT01) (Photorhabdus luminescens subsp. laumondii).